The sequence spans 690 residues: Cysteine-rich receptor-like protein kinase 21 (690 aa).

The signal sequence occupies residues 1 to 24 (MQKNKMVDLRAIFWFVVISSCAVA). Residues 25–129 (APTCIQRSDF…CLVRYSNHLI (105 aa)) enclose the Gnk2-homologous 1 domain. Residues 25 to 281 (APTCIQRSDF…KDGKNISTGS (257 aa)) are Extracellular-facing. N-linked (GlcNAc...) asparagine glycans are attached at residues asparagine 130, asparagine 148, asparagine 155, asparagine 220, asparagine 268, and asparagine 276. Residues 140 to 246 (AEYIEYKYNT…CFMRWDLQPF (107 aa)) form the Gnk2-homologous 2 domain. Residues 282–302 (IVAIAVVSVVVSTVLLALGYA) form a helical membrane-spanning segment. Topologically, residues 303-690 (VSRRRKAYQS…DASITSVRPR (388 aa)) are cytoplasmic. A Protein kinase domain is found at 363–640 (FHKSNKLGHG…IFRMLTNVSI (278 aa)). ATP is bound by residues 369 to 377 (LGHGGFGAV) and lysine 391. Position 436 is a phosphotyrosine (tyrosine 436). Aspartate 488 acts as the Proton acceptor in catalysis. Serine 492 is subject to Phosphoserine. At threonine 528 the chain carries Phosphothreonine. At tyrosine 536 the chain carries Phosphotyrosine.

The protein belongs to the protein kinase superfamily. Ser/Thr protein kinase family. CRK subfamily.

It is found in the membrane. It carries out the reaction L-seryl-[protein] + ATP = O-phospho-L-seryl-[protein] + ADP + H(+). It catalyses the reaction L-threonyl-[protein] + ATP = O-phospho-L-threonyl-[protein] + ADP + H(+). This is Cysteine-rich receptor-like protein kinase 21 (CRK21) from Arabidopsis thaliana (Mouse-ear cress).